The chain runs to 414 residues: CCA-adding enzyme (414 aa).

The ATP site is built by Gly-8 and Arg-11. 2 residues coordinate CTP: Gly-8 and Arg-11. Positions 21 and 23 each coordinate Mg(2+). Positions 91, 137, and 140 each coordinate ATP. 3 residues coordinate CTP: Arg-91, Arg-137, and Arg-140.

This sequence belongs to the tRNA nucleotidyltransferase/poly(A) polymerase family. Bacterial CCA-adding enzyme type 2 subfamily. Requires Mg(2+) as cofactor.

The enzyme catalyses a tRNA precursor + 2 CTP + ATP = a tRNA with a 3' CCA end + 3 diphosphate. The catalysed reaction is a tRNA with a 3' CCA end + 2 CTP + ATP = a tRNA with a 3' CCACCA end + 3 diphosphate. Functionally, catalyzes the addition and repair of the essential 3'-terminal CCA sequence in tRNAs without using a nucleic acid template. Adds these three nucleotides in the order of C, C, and A to the tRNA nucleotide-73, using CTP and ATP as substrates and producing inorganic pyrophosphate. tRNA 3'-terminal CCA addition is required both for tRNA processing and repair. Also involved in tRNA surveillance by mediating tandem CCA addition to generate a CCACCA at the 3' terminus of unstable tRNAs. While stable tRNAs receive only 3'-terminal CCA, unstable tRNAs are marked with CCACCA and rapidly degraded. The polypeptide is CCA-adding enzyme (Buchnera aphidicola subsp. Acyrthosiphon pisum (strain 5A)).